Reading from the N-terminus, the 164-residue chain is Interferon gamma (164 aa).

The signal sequence occupies residues 1 to 19; the sequence is MTCQTYNLFVLSVIMIYYG. Residues Asn-42 and Asn-61 are each glycosylated (N-linked (GlcNAc...) asparagine).

It belongs to the type II (or gamma) interferon family. Homodimer.

It is found in the secreted. In terms of biological role, produced by lymphocytes activated by specific antigens or mitogens. IFN-gamma, in addition to having antiviral activity, has important immunoregulatory functions. It is a potent activator of macrophages, it has antiproliferative effects on transformed cells and it can potentiate the antiviral and antitumor effects of the type I interferons. This chain is Interferon gamma (IFNG), found in Meleagris gallopavo (Wild turkey).